The chain runs to 382 residues: Glutaminyl-peptide cyclotransferase-like protein (382 aa).

A helical transmembrane segment spans residues 35-55 (LLPLLLALAVGSAFYTIWSGW). Cysteines 167 and 191 form a disulfide. Asp186 provides a ligand contact to Zn(2+). Glu225 serves as the catalytic Proton acceptor. Glu226 is a Zn(2+) binding site. Catalysis depends on Asp269, which acts as the Proton acceptor. His351 is a Zn(2+) binding site.

The protein belongs to the glutaminyl-peptide cyclotransferase family.

Its subcellular location is the golgi apparatus membrane. It catalyses the reaction N-terminal L-glutaminyl-[peptide] = N-terminal 5-oxo-L-prolyl-[peptide] + NH4(+). Responsible for the biosynthesis of pyroglutamyl peptides. The sequence is that of Glutaminyl-peptide cyclotransferase-like protein (QPCTL) from Macaca fascicularis (Crab-eating macaque).